We begin with the raw amino-acid sequence, 355 residues long: Peptide chain release factor 1 (355 aa).

Gln233 is modified (N5-methylglutamine). Basic and acidic residues predominate over residues 280-293 (ERRKKEQERADSRR). The interval 280–306 (ERRKKEQERADSRRGQVGSGNRSERIR) is disordered.

Belongs to the prokaryotic/mitochondrial release factor family. In terms of processing, methylated by PrmC. Methylation increases the termination efficiency of RF1.

The protein localises to the cytoplasm. Functionally, peptide chain release factor 1 directs the termination of translation in response to the peptide chain termination codons UAG and UAA. The chain is Peptide chain release factor 1 from Rickettsia africae (strain ESF-5).